The following is a 789-amino-acid chain: Fibrinogen alpha chain (789 aa).

The signal sequence occupies residues 1–19 (MLSLRVTCLILSVASTVWT). Ser-46 carries the post-translational modification Phosphoserine. Residues 69–554 (CRMKGLIDEA…GRARARPTRD (486 aa)) are a coiled coil. Composition is skewed to basic and acidic residues over residues 263–287 (ERPGKDGGSRGDSPGDSRGDSRGDF) and 384–396 (KGDKELLIGKEKV). Residues 263–420 (ERPGKDGGSR…TITKTVTGPD (158 aa)) are disordered. Over residues 397–416 (TSSGTSTTHRSCSKTITKTV) the composition is skewed to polar residues. Cysteines 408 and 438 form a disulfide. Ser-447 is modified (phosphoserine). Pro-504 carries the 4-hydroxyproline; by P4HA1 modification. Positions 526 to 541 (ADEAGSEAHREGETRN) are enriched in basic and acidic residues. Residues 526–555 (ADEAGSEAHREGETRNTKRGRARARPTRDC) are disordered. One can recognise a Fibrinogen C-terminal domain in the interval 546–787 (RARARPTRDC…AVRMKIRPLV (242 aa)). Asn-609 carries N-linked (GlcNAc...) asparagine glycosylation. Ca(2+) contacts are provided by Asp-714, Asp-716, Trp-718, and Glu-720. A disulfide bond links Cys-722 and Cys-735.

Heterohexamer; disulfide linked. Contains 2 sets of 3 non-identical chains (alpha, beta and gamma). The 2 heterotrimers are in head to head conformation with the N-termini in a small central domain. Post-translationally, conversion of fibrinogen to fibrin is triggered by thrombin, which cleaves fibrinopeptides A and B from alpha and beta chains, and thus exposes the N-terminal polymerization sites responsible for the formation of the soft clot. The soft clot is converted into the hard clot by factor XIIIA which catalyzes the epsilon-(gamma-glutamyl)lysine cross-linking between gamma chains (stronger) and between alpha chains (weaker) of different monomers. Forms F13A-mediated cross-links between a glutamine and the epsilon-amino group of a lysine residue, forming fibronectin-fibrinogen heteropolymers. In terms of processing, phosphorylated by FAM20C in the extracellular medium. In terms of tissue distribution, expressed in liver.

The protein localises to the secreted. Functionally, cleaved by the protease thrombin to yield monomers which, together with fibrinogen beta (FGB) and fibrinogen gamma (FGG), polymerize to form an insoluble fibrin matrix. Fibrin has a major function in hemostasis as one of the primary components of blood clots. In addition, functions during the early stages of wound repair to stabilize the lesion and guide cell migration during re-epithelialization. Was originally thought to be essential for platelet aggregation, based on in vitro studies using anticoagulated blood. However, subsequent studies have shown that it is not absolutely required for thrombus formation in vivo. Enhances expression of SELP in activated platelets via an ITGB3-dependent pathway. Maternal fibrinogen is essential for successful pregnancy. Fibrin deposition is also associated with infection, where it protects against IFNG-mediated hemorrhage. May also facilitate the immune response via both innate and T-cell mediated pathways. The protein is Fibrinogen alpha chain of Mus musculus (Mouse).